A 179-amino-acid chain; its full sequence is Shikimate kinase (179 aa).

15–20 is a binding site for ATP; the sequence is GAGKTS. A Mg(2+)-binding site is contributed by Thr19. Residues Asp37, Arg61, and Gly83 each contribute to the substrate site. Arg122 contributes to the ATP binding site. Arg142 provides a ligand contact to substrate.

The protein belongs to the shikimate kinase family. As to quaternary structure, monomer. Requires Mg(2+) as cofactor.

Its subcellular location is the cytoplasm. The enzyme catalyses shikimate + ATP = 3-phosphoshikimate + ADP + H(+). It functions in the pathway metabolic intermediate biosynthesis; chorismate biosynthesis; chorismate from D-erythrose 4-phosphate and phosphoenolpyruvate: step 5/7. In terms of biological role, catalyzes the specific phosphorylation of the 3-hydroxyl group of shikimic acid using ATP as a cosubstrate. The protein is Shikimate kinase of Coxiella burnetii (strain RSA 331 / Henzerling II).